The following is a 123-amino-acid chain: Large ribosomal subunit protein bL12 (123 aa).

The protein belongs to the bacterial ribosomal protein bL12 family. Homodimer. Part of the ribosomal stalk of the 50S ribosomal subunit. Forms a multimeric L10(L12)X complex, where L10 forms an elongated spine to which 2 to 4 L12 dimers bind in a sequential fashion. Binds GTP-bound translation factors.

Its function is as follows. Forms part of the ribosomal stalk which helps the ribosome interact with GTP-bound translation factors. Is thus essential for accurate translation. The protein is Large ribosomal subunit protein bL12 of Haemophilus influenzae (strain 86-028NP).